Consider the following 173-residue polypeptide: Membrane protein PM19L (173 aa).

4 helical membrane passes run 9–29, 43–63, 83–103, and 124–144; these read IAPLLVLNLIMYLIVIGFASW, GVAGNGATFYFLVFAILAGVV, LAAGAASALIAWAITALAFGL, and FVIILAFTQLLYVAMLHGGLF.

As to expression, expressed in roots, leaf blades, leaf sheaths, stems, spikelets and embryos.

The protein localises to the membrane. Functionally, may be involved in abiotic stress response through abscisic acid-dependent signaling. The chain is Membrane protein PM19L from Oryza sativa subsp. japonica (Rice).